The sequence spans 190 residues: Lipocalin Can f 6.0101 (190 aa).

Positions 1 to 15 are cleaved as a signal peptide; the sequence is MKLLLLCLGLILVHA. Residues 43–54 form an igE-binding region; sequence SDIKEKIEENGS. Residues N52 and N67 are each glycosylated (N-linked (GlcNAc...) asparagine). The interval 76–83 is igE-binding; that stretch reads TKVNGKCT. C82 and C175 are joined by a disulfide. The N-linked (GlcNAc...) asparagine glycan is linked to N90. The segment at 91–97 is igE-binding; the sequence is KTEKDGE. The tract at residues 100–109 is no IgE-binding; it reads VVHDGYNLFR. IgE-binding regions lie at residues 125–132 and 139–152; these read NVNQEQEF and GRKP…KEKF.

This sequence belongs to the calycin superfamily. Lipocalin family. Monomer. Expressed in saliva (at protein level). Expressed in dander (at protein level). According to PubMed:22104604, expressed in submaxillary gland. In contrast, according to PubMed:22515174, not expressed in submaxillary gland. Expressed in bladder and skin, but not in tongue.

Its subcellular location is the secreted. This chain is Lipocalin Can f 6.0101, found in Canis lupus familiaris (Dog).